Reading from the N-terminus, the 211-residue chain is Endonuclease YncB (211 aa).

Positions 1-19 (MKKILISMIAIVLSITLAA) are cleaved as a signal peptide. Cys-20 carries N-palmitoyl cysteine lipidation. A lipid anchor (S-diacylglycerol cysteine) is attached at Cys-20. The interval 24–63 (HAAKNHSDSNGTEQVSQDTHSNEYNQTEQKAGTPHSKNQK) is disordered. Residues 31-53 (DSNGTEQVSQDTHSNEYNQTEQK) are compositionally biased toward polar residues. The TNase-like domain occupies 64 to 197 (KLVNVTLDRA…KSDKLSIWSK (134 aa)). Asp-77 lines the Ca(2+) pocket. Arg-91 is a catalytic residue. Ca(2+) contacts are provided by Asp-96 and Thr-97. Residues Glu-99 and Arg-142 contribute to the active site.

The protein belongs to the thermonuclease family. It depends on Ca(2+) as a cofactor.

The protein localises to the cell membrane. Its activity is regulated as follows. Inhibited by aurintricalboxylic acid but not by Zn(2+). Functionally, shows DNase activity on double strand DNA. The polypeptide is Endonuclease YncB (yncB) (Bacillus subtilis (strain 168)).